A 712-amino-acid polypeptide reads, in one-letter code: Polyphosphate kinase (712 aa).

Asn49 is an ATP binding site. Mg(2+) contacts are provided by Arg398 and Arg428. His458 (phosphohistidine intermediate) is an active-site residue. Positions 491, 587, and 615 each coordinate ATP.

This sequence belongs to the polyphosphate kinase 1 (PPK1) family. The cofactor is Mg(2+). An intermediate of this reaction is the autophosphorylated ppk in which a phosphate is covalently linked to a histidine residue through a N-P bond.

The catalysed reaction is [phosphate](n) + ATP = [phosphate](n+1) + ADP. Catalyzes the reversible transfer of the terminal phosphate of ATP to form a long-chain polyphosphate (polyP). In Parasynechococcus marenigrum (strain WH8102), this protein is Polyphosphate kinase.